We begin with the raw amino-acid sequence, 218 residues long: Large ribosomal subunit protein uL3 (218 aa).

Belongs to the universal ribosomal protein uL3 family. Part of the 50S ribosomal subunit. Forms a cluster with proteins L14 and L19.

One of the primary rRNA binding proteins, it binds directly near the 3'-end of the 23S rRNA, where it nucleates assembly of the 50S subunit. The sequence is that of Large ribosomal subunit protein uL3 from Syntrophus aciditrophicus (strain SB).